The chain runs to 319 residues: Acetyl-coenzyme A carboxylase carboxyl transferase subunit alpha (319 aa).

The CoA carboxyltransferase C-terminal domain occupies 36 to 293 (EVERLKTKLE…HDAFLSELDR (258 aa)).

It belongs to the AccA family. Acetyl-CoA carboxylase is a heterohexamer composed of biotin carboxyl carrier protein (AccB), biotin carboxylase (AccC) and two subunits each of ACCase subunit alpha (AccA) and ACCase subunit beta (AccD).

The protein localises to the cytoplasm. The catalysed reaction is N(6)-carboxybiotinyl-L-lysyl-[protein] + acetyl-CoA = N(6)-biotinyl-L-lysyl-[protein] + malonyl-CoA. It participates in lipid metabolism; malonyl-CoA biosynthesis; malonyl-CoA from acetyl-CoA: step 1/1. Functionally, component of the acetyl coenzyme A carboxylase (ACC) complex. First, biotin carboxylase catalyzes the carboxylation of biotin on its carrier protein (BCCP) and then the CO(2) group is transferred by the carboxyltransferase to acetyl-CoA to form malonyl-CoA. The sequence is that of Acetyl-coenzyme A carboxylase carboxyl transferase subunit alpha from Dichelobacter nodosus (strain VCS1703A).